Here is a 221-residue protein sequence, read N- to C-terminus: Growth hormone-releasing peptides (221 aa).

Positions 1–25 (MHLKIGTLTIRTIMLFTLCTFLTLF) are cleaved as a signal peptide. Residues 26 to 95 (AFSTCFDETK…QPENEFLQER (70 aa)) constitute a propeptide that is removed on maturation. Phe107 carries the post-translational modification Phenylalanine amide. A propeptide spanning residues 110–127 (TSDDKIAKSIPSFDKIAK) is cleaved from the precursor. A phenylalanine amide mark is found at Phe136, Phe156, and Phe176. Residues 179–221 (TPHSDRLQYEMNSHPLELKNPEEDSDRKKRQAMTFRIRTDLQM) constitute a propeptide that is removed on maturation.

This sequence belongs to the FARP (FMRFamide related peptide) family. As to expression, observed in the suprachiasmatic nucleus and in several telencephalic and diencephalic regions.

Its subcellular location is the secreted. In terms of biological role, primary role is to release GH from the pituitary. May act as an endogenous ligand in the bullfrog hypothalamo-hypophysial system. The sequence is that of Growth hormone-releasing peptides from Aquarana catesbeiana (American bullfrog).